A 208-amino-acid chain; its full sequence is Uracil phosphoribosyltransferase (208 aa).

5-phospho-alpha-D-ribose 1-diphosphate is bound by residues R78, R103, and 130–138; that span reads DPMLATGGS. Uracil contacts are provided by residues I193 and 198-200; that span reads GDA. D199 serves as a coordination point for 5-phospho-alpha-D-ribose 1-diphosphate.

It belongs to the UPRTase family. Mg(2+) is required as a cofactor.

The enzyme catalyses UMP + diphosphate = 5-phospho-alpha-D-ribose 1-diphosphate + uracil. It participates in pyrimidine metabolism; UMP biosynthesis via salvage pathway; UMP from uracil: step 1/1. Its activity is regulated as follows. Allosterically activated by GTP. Its function is as follows. Catalyzes the conversion of uracil and 5-phospho-alpha-D-ribose 1-diphosphate (PRPP) to UMP and diphosphate. This chain is Uracil phosphoribosyltransferase, found in Enterobacter sp. (strain 638).